An 87-amino-acid chain; its full sequence is Glutaredoxin (87 aa).

The Glutaredoxin domain maps to 1–87 (MFVVIFGRPG…LMKEQFGIVA (87 aa)). An intrachain disulfide couples Cys-11 to Cys-14.

It belongs to the glutaredoxin family. In terms of assembly, monomer.

The protein localises to the cytoplasm. Functionally, has a glutathione-disulfide oxidoreductase activity in the presence of NADPH and glutathione reductase. Reduces low molecular weight disulfides and proteins. The sequence is that of Glutaredoxin (grxA) from Haemophilus influenzae (strain ATCC 51907 / DSM 11121 / KW20 / Rd).